The chain runs to 63 residues: Large ribosomal subunit protein uL30 (63 aa).

It belongs to the universal ribosomal protein uL30 family. Part of the 50S ribosomal subunit.

The sequence is that of Large ribosomal subunit protein uL30 from Chlorobium chlorochromatii (strain CaD3).